The primary structure comprises 294 residues: 4-hydroxy-tetrahydrodipicolinate synthase (294 aa).

Thr45 is a pyruvate binding site. Tyr133 functions as the Proton donor/acceptor in the catalytic mechanism. Lys162 serves as the catalytic Schiff-base intermediate with substrate. Ile204 lines the pyruvate pocket.

It belongs to the DapA family. Homotetramer; dimer of dimers.

Its subcellular location is the cytoplasm. The enzyme catalyses L-aspartate 4-semialdehyde + pyruvate = (2S,4S)-4-hydroxy-2,3,4,5-tetrahydrodipicolinate + H2O + H(+). It participates in amino-acid biosynthesis; L-lysine biosynthesis via DAP pathway; (S)-tetrahydrodipicolinate from L-aspartate: step 3/4. Catalyzes the condensation of (S)-aspartate-beta-semialdehyde [(S)-ASA] and pyruvate to 4-hydroxy-tetrahydrodipicolinate (HTPA). This Rhizobium meliloti (strain 1021) (Ensifer meliloti) protein is 4-hydroxy-tetrahydrodipicolinate synthase.